A 351-amino-acid chain; its full sequence is Porphobilinogen deaminase (351 aa).

An S-(dipyrrolylmethanemethyl)cysteine modification is found at Cys242.

This sequence belongs to the HMBS family. As to quaternary structure, monomer. Requires dipyrromethane as cofactor.

It carries out the reaction 4 porphobilinogen + H2O = hydroxymethylbilane + 4 NH4(+). It functions in the pathway porphyrin-containing compound metabolism; protoporphyrin-IX biosynthesis; coproporphyrinogen-III from 5-aminolevulinate: step 2/4. In terms of biological role, tetrapolymerization of the monopyrrole PBG into the hydroxymethylbilane pre-uroporphyrinogen in several discrete steps. This chain is Porphobilinogen deaminase, found in Rickettsia peacockii (strain Rustic).